Consider the following 191-residue polypeptide: Putative 3-methyladenine DNA glycosylase (191 aa).

This sequence belongs to the DNA glycosylase MPG family.

In Carboxydothermus hydrogenoformans (strain ATCC BAA-161 / DSM 6008 / Z-2901), this protein is Putative 3-methyladenine DNA glycosylase.